The primary structure comprises 128 residues: Large ribosomal subunit protein bL17 (128 aa).

It belongs to the bacterial ribosomal protein bL17 family. As to quaternary structure, part of the 50S ribosomal subunit. Contacts protein L32.

The protein is Large ribosomal subunit protein bL17 of Streptococcus mutans serotype c (strain ATCC 700610 / UA159).